Consider the following 310-residue polypeptide: Fructose-bisphosphate aldolase/6-deoxy-5-ketofructose 1-phosphate synthase (310 aa).

Substrate is bound by residues 48–49 (DQ), His53, Asp57, and Trp180. Tyr182 serves as the catalytic Proton donor. Substrate-binding positions include Arg184, 213-215 (KVN), 241-243 (AGG), and 270-271 (GR). Catalysis depends on Lys213, which acts as the Schiff-base intermediate with dihydroxyacetone-P. Lys213 acts as the Schiff-base intermediate with substrate in catalysis.

This sequence belongs to the DeoC/FbaB aldolase family.

The enzyme catalyses beta-D-fructose 1,6-bisphosphate = D-glyceraldehyde 3-phosphate + dihydroxyacetone phosphate. The catalysed reaction is beta-D-fructose 1,6-bisphosphate + methylglyoxal = 1-deoxy-D-threo-hexo-2,5-diulose 6-phosphate + D-glyceraldehyde 3-phosphate. It carries out the reaction beta-D-fructose 1-phosphate + methylglyoxal = 1-deoxy-D-threo-hexo-2,5-diulose 6-phosphate + D-glyceraldehyde. The protein operates within aromatic compound metabolism. Its function is as follows. Catalyzes the transaldolization of either fructose-1-P or fructose-1,6-bisphosphate with methylglyoxal to produce 6-deoxy-5-ketofructose-1-phosphate (DKFP). Also catalyzes the reversible aldol condensation of dihydroxyacetone phosphate (DHAP or glycerone-phosphate) with glyceraldehyde 3-phosphate (G3P or GAP) to produce fructose 1,6-bisphosphate (FBP). The chain is Fructose-bisphosphate aldolase/6-deoxy-5-ketofructose 1-phosphate synthase from Methanocaldococcus jannaschii (strain ATCC 43067 / DSM 2661 / JAL-1 / JCM 10045 / NBRC 100440) (Methanococcus jannaschii).